The sequence spans 294 residues: Uracil-DNA glycosylase (294 aa).

Asp139 acts as the Proton acceptor in catalysis.

The protein belongs to the uracil-DNA glycosylase (UDG) superfamily. UNG family.

The protein resides in the host nucleus. The catalysed reaction is Hydrolyzes single-stranded DNA or mismatched double-stranded DNA and polynucleotides, releasing free uracil.. In terms of biological role, excises uracil residues from the DNA which can arise as a result of misincorporation of dUMP residues by DNA polymerase or deamination of cytosines. Therefore may reduce deleterious uracil incorporation into the viral genome, particularly in terminally differentiated cells which lack DNA repair enzymes. This chain is Uracil-DNA glycosylase (UL2), found in Human herpesvirus 2 (strain 333) (HHV-2).